The following is a 417-amino-acid chain: NADH-quinone oxidoreductase subunit D (417 aa).

The protein belongs to the complex I 49 kDa subunit family. NDH-1 is composed of 14 different subunits. Subunits NuoB, C, D, E, F, and G constitute the peripheral sector of the complex.

Its subcellular location is the cell inner membrane. The enzyme catalyses a quinone + NADH + 5 H(+)(in) = a quinol + NAD(+) + 4 H(+)(out). Its function is as follows. NDH-1 shuttles electrons from NADH, via FMN and iron-sulfur (Fe-S) centers, to quinones in the respiratory chain. The immediate electron acceptor for the enzyme in this species is believed to be ubiquinone. Couples the redox reaction to proton translocation (for every two electrons transferred, four hydrogen ions are translocated across the cytoplasmic membrane), and thus conserves the redox energy in a proton gradient. This is NADH-quinone oxidoreductase subunit D from Herminiimonas arsenicoxydans.